We begin with the raw amino-acid sequence, 466 residues long: Soluble pyridine nucleotide transhydrogenase (466 aa).

36–45 lines the FAD pocket; that stretch reads ERYQNVGGGC.

The protein belongs to the class-I pyridine nucleotide-disulfide oxidoreductase family. Homooligomer; probable homooctamer. The cofactor is FAD.

The protein localises to the cytoplasm. It carries out the reaction NAD(+) + NADPH = NADH + NADP(+). In terms of biological role, conversion of NADPH, generated by peripheral catabolic pathways, to NADH, which can enter the respiratory chain for energy generation. The protein is Soluble pyridine nucleotide transhydrogenase of Escherichia coli O6:H1 (strain CFT073 / ATCC 700928 / UPEC).